The chain runs to 99 residues: Large ribosomal subunit protein eL21 (99 aa).

The protein belongs to the eukaryotic ribosomal protein eL21 family.

This is Large ribosomal subunit protein eL21 from Pyrobaculum calidifontis (strain DSM 21063 / JCM 11548 / VA1).